Consider the following 324-residue polypeptide: Homocysteine S-methyltransferase 1 (324 aa).

One can recognise a Hcy-binding domain in the interval 6-320; sequence IKELIVEHPG…KDIAEIASAV (315 aa). Positions 238, 305, and 306 each coordinate Zn(2+).

Requires Zn(2+) as cofactor.

The protein localises to the cytoplasm. It catalyses the reaction S-methyl-L-methionine + L-homocysteine = 2 L-methionine + H(+). Homocysteine S-methyltransferase involved in the conversion of S-adenosylmethionine (AdoMet) to methionine to control the methionine/AdoMet ratio. Also converts S-methylmethionine (SMM) to methionine. The chain is Homocysteine S-methyltransferase 1 (MHT1) from Saccharomyces cerevisiae (strain ATCC 204508 / S288c) (Baker's yeast).